Reading from the N-terminus, the 690-residue chain is Calpain-9 (690 aa).

The segment at 1–24 (MPYLYRAPGPQAHPVPKDARITHS) is disordered. The region spanning 42–337 (LFEDADFPAS…FDKVEICNLT (296 aa)) is the Calpain catalytic domain. Residues Leu-81, Gly-83, and Asp-88 each contribute to the Ca(2+) site. Cys-97 is a catalytic residue. Glu-167 is a binding site for Ca(2+). Active-site residues include His-254 and Asn-278. Ca(2+) is bound by residues Glu-284, Asp-291, Leu-312, Asp-314, and Glu-316. A domain III region spans residues 338–521 (PDALEEDAIH…PPDQETEEEQ (184 aa)). Residues 498 to 519 (GNVDIDLPEPPKPTPPDQETEE) are disordered. 3 consecutive EF-hand domains span residues 518–552 (EEEQ…VLQK), 561–589 (LSLI…FKVF), and 591–626 (DKLK…AGFQ). The interval 522 to 690 (RFRALFEQVA…NEFIHLTMNI (169 aa)) is domain IV. The Ca(2+) site is built by Asp-574, Ser-576, Asn-578, Lys-580, Glu-585, Asp-604, Asp-606, Ser-608, Thr-610, and Glu-615.

It belongs to the peptidase C2 family. In terms of tissue distribution, expressed predominantly in stomach.

Its function is as follows. Calcium-regulated non-lysosomal thiol-protease. This Homo sapiens (Human) protein is Calpain-9 (CAPN9).